The following is a 752-amino-acid chain: Polyribonucleotide nucleotidyltransferase (752 aa).

Mg(2+)-binding residues include Asp542 and Asp548. A KH domain is found at 608 to 667; sequence PRITTIQIPVSKIGELIGPKGKNINALTEETGANISIEDDGTVFISAASGEAAEAAIEKI. Positions 679–748 constitute an S1 motif domain; the sequence is GERFLGTVVK…NRGKISLVPV (70 aa).

It belongs to the polyribonucleotide nucleotidyltransferase family. The cofactor is Mg(2+).

The protein localises to the cytoplasm. The catalysed reaction is RNA(n+1) + phosphate = RNA(n) + a ribonucleoside 5'-diphosphate. Its function is as follows. Involved in mRNA degradation. Catalyzes the phosphorolysis of single-stranded polyribonucleotides processively in the 3'- to 5'-direction. This is Polyribonucleotide nucleotidyltransferase from Corynebacterium efficiens (strain DSM 44549 / YS-314 / AJ 12310 / JCM 11189 / NBRC 100395).